A 444-amino-acid polypeptide reads, in one-letter code: Acetyl-CoA--deacetylcephalosporin C acetyltransferase (444 aa).

Residues 1-71 (MLPSAQVARL…PQIANRFEAS (71 aa)) constitute a propeptide that is removed on maturation. An AB hydrolase-1 domain is found at 112–425 (VIVCHTLTSS…DTNEGHDFFV (314 aa)). Residues S208 and H421 contribute to the active site.

Belongs to the AB hydrolase superfamily. MetX family. As to quaternary structure, heterodimer of chain I and chain II.

The catalysed reaction is deacetylcephalosporin C + acetyl-CoA = cephalosporin C + CoA. The protein operates within antibiotic biosynthesis; cephalosporin C biosynthesis. Its function is as follows. Catalyzes the conversion of deacetylcephalosporin C to cephalosporin C. This Hapsidospora chrysogena (Acremonium chrysogenum) protein is Acetyl-CoA--deacetylcephalosporin C acetyltransferase (CEFG).